Here is a 248-residue protein sequence, read N- to C-terminus: Probable transcriptional regulatory protein RL3983 (248 aa).

This sequence belongs to the TACO1 family.

The protein localises to the cytoplasm. The chain is Probable transcriptional regulatory protein RL3983 from Rhizobium johnstonii (strain DSM 114642 / LMG 32736 / 3841) (Rhizobium leguminosarum bv. viciae).